Here is a 296-residue protein sequence, read N- to C-terminus: Protoheme IX farnesyltransferase (296 aa).

Over M1–V9 the chain is Cytoplasmic. A helical transmembrane segment spans residues T10–L28. The Periplasmic portion of the chain corresponds to A29–P37. A helical transmembrane segment spans residues L38–F56. At N57–K78 the chain is on the cytoplasmic side. The chain crosses the membrane as a helical span at residues G79–G97. Topologically, residues F98 to P107 are periplasmic. The helical transmembrane segment at L108–L126 threads the bilayer. The Cytoplasmic portion of the chain corresponds to Y127–P197. The chain crosses the membrane as a helical span at residues V198 to F216. Over A217 to Y228 the chain is Periplasmic. Residues A229–M247 form a helical membrane-spanning segment. Topologically, residues A248–S268 are cytoplasmic. The helical transmembrane segment at I269 to D287 threads the bilayer. Topologically, residues S288 to W296 are periplasmic.

It belongs to the UbiA prenyltransferase family. Protoheme IX farnesyltransferase subfamily.

It is found in the cell inner membrane. The catalysed reaction is heme b + (2E,6E)-farnesyl diphosphate + H2O = Fe(II)-heme o + diphosphate. It functions in the pathway porphyrin-containing compound metabolism; heme O biosynthesis; heme O from protoheme: step 1/1. In terms of biological role, converts heme B (protoheme IX) to heme O by substitution of the vinyl group on carbon 2 of heme B porphyrin ring with a hydroxyethyl farnesyl side group. In Shigella sonnei (strain Ss046), this protein is Protoheme IX farnesyltransferase.